The following is a 488-amino-acid chain: Inositol 1,3,4-trisphosphate 5/6-kinase 4 (488 aa).

1D-myo-inositol 1,3,4-trisphosphate is bound by residues Lys208 and Lys224. Residues 246 to 488 form the ATP-grasp domain; it reads NACAIVDPIR…RFDQHVQEKH (243 aa). Residues Arg263 and Lys315 each coordinate ATP. His326 and Lys360 together coordinate 1D-myo-inositol 1,3,4-trisphosphate. Residues 349–360, Ser375, and Ser398 contribute to the ATP site; that span reads QEYVDHSSRIFK. The Mg(2+) site is built by Asp439, Asp453, and Asn455. Residues Asn455 and Ser459 each contribute to the 1D-myo-inositol 1,3,4-trisphosphate site.

This sequence belongs to the ITPK1 family. Monomer. The cofactor is Mg(2+). Expressed in roots, leaf vasculature, cauline leaves, flower buds and siliques.

It catalyses the reaction 1D-myo-inositol 1,3,4-trisphosphate + ATP = 1D-myo-inositol 1,3,4,5-tetrakisphosphate + ADP + H(+). The catalysed reaction is 1D-myo-inositol 1,3,4-trisphosphate + ATP = 1D-myo-inositol 1,3,4,6-tetrakisphosphate + ADP + H(+). Its function is as follows. Kinase that can phosphorylate the inositol polyphosphate Ins(1,3,4)P3 to form InsP4. Also phosphorylates a racemic mixture of Ins(1,4,6)P3 and Ins(3,4,6)P3 to form InsP4. Does not display inositol 3,4,5,6-tetrakisphosphate 1-kinase activity, but possesses inositol 1,4,5,6-tetrakisphosphate and inositol 1,3,4,5-tetrakisphosphate isomerase activity. Ins(1,3,4,6)P4 is an essential molecule in the hexakisphosphate (InsP6) pathway. The polypeptide is Inositol 1,3,4-trisphosphate 5/6-kinase 4 (ITPK4) (Arabidopsis thaliana (Mouse-ear cress)).